The primary structure comprises 1194 residues: Multidrug efflux ATP-binding/permease protein Rv0194 (1194 aa).

Transmembrane regions (helical) follow at residues Leu-20 to Val-40, Leu-56 to Val-76, Leu-130 to Val-150, Trp-153 to Ala-173, Phe-258 to Phe-278, and Trp-279 to Ala-299. Positions Leu-21–Gln-301 constitute an ABC transmembrane type-1 1 domain. The region spanning Leu-334–Pro-568 is the ABC transporter 1 domain. Residue Gly-367–Ser-374 participates in ATP binding. The next 6 membrane-spanning stretches (helical) occupy residues Ala-628–Ile-648, Val-660–Val-680, Leu-743–Ile-763, Ala-765–Phe-785, Leu-847–Leu-867, and Val-878–Ile-898. The region spanning Ala-628–Arg-910 is the ABC transmembrane type-1 2 domain. Residues Val-942–Ala-1177 enclose the ABC transporter 2 domain. Gly-976–Ser-983 lines the ATP pocket.

It belongs to the ABC transporter superfamily. Lipid exporter (TC 3.A.1.106) family.

It is found in the cell inner membrane. Its activity is regulated as follows. Efflux is inhibited by reserpine. Functionally, overexpression in M.smegmatis increases resistance to erythromycin, ampicillin, novobiocin and vancomycin. It also reduces accumulation of ethidium bromide in the cell. This is Multidrug efflux ATP-binding/permease protein Rv0194 from Mycobacterium tuberculosis (strain ATCC 25618 / H37Rv).